A 339-amino-acid polypeptide reads, in one-letter code: MKDTADITVLGAGSYGTALAISLASNGHKTLLWGHDPEHIATLSRERCNAAFLPGISFPDCLVMEADLGKALAASRNVLVVVPSHVFGDVLRQAKSLLRADARIVWATKGLEPETGRLLQDVARDALGDAFPLAVLSGPTFAKELAAGLPTAISVAGTDAGFTADLVELLHSPKRLRVYANDDFIGLQLGGAVKNVIAIGAGMSDGIGFGANARTALITRGLVELSRLGEALGAQQATFMGMAGLGDLVLTCTDNQSRNRRFGLALGKGCDVNTAQSEIGQVVEGYRNTKEVFTLAKRLGVEMPITEQIYAVLYQGKSPLDAAKELLAREKKSETAAAD.

Residues serine 14, tyrosine 15, histidine 35, and lysine 109 each contribute to the NADPH site. Sn-glycerol 3-phosphate-binding residues include lysine 109, glycine 138, and threonine 140. Alanine 142 is an NADPH binding site. Residues lysine 194, aspartate 247, serine 257, arginine 258, and asparagine 259 each contribute to the sn-glycerol 3-phosphate site. The Proton acceptor role is filled by lysine 194. Arginine 258 is an NADPH binding site. NADPH contacts are provided by valine 282 and glutamate 284.

It belongs to the NAD-dependent glycerol-3-phosphate dehydrogenase family.

It localises to the cytoplasm. It carries out the reaction sn-glycerol 3-phosphate + NAD(+) = dihydroxyacetone phosphate + NADH + H(+). The catalysed reaction is sn-glycerol 3-phosphate + NADP(+) = dihydroxyacetone phosphate + NADPH + H(+). It participates in membrane lipid metabolism; glycerophospholipid metabolism. Functionally, catalyzes the reduction of the glycolytic intermediate dihydroxyacetone phosphate (DHAP) to sn-glycerol 3-phosphate (G3P), the key precursor for phospholipid synthesis. This Shewanella amazonensis (strain ATCC BAA-1098 / SB2B) protein is Glycerol-3-phosphate dehydrogenase [NAD(P)+].